A 1162-amino-acid polypeptide reads, in one-letter code: Topoisomerase 1-associated factor 1 (1162 aa).

Disordered stretches follow at residues 977–1017 (TEGR…EANA) and 1127–1162 (TQVVSSEEYSSHPLEEEVTSEQRKRKKPRIESDTEY). The segment covering 993-1003 (QRSKGKRKAIA) has biased composition (basic residues).

This sequence belongs to the timeless family. As to quaternary structure, component of the fork protection complex (FPC) consisting of TOF1 and CSM3.

The protein localises to the nucleus. In terms of biological role, forms a fork protection complex (FPC) with CSM3 and which is required for chromosome segregation during meiosis and DNA damage repair. FPC coordinates leading and lagging strand synthesis and moves with the replication fork. FPC stabilizes replication forks in a configuration that is recognized by replication checkpoint sensors. In Kluyveromyces lactis (strain ATCC 8585 / CBS 2359 / DSM 70799 / NBRC 1267 / NRRL Y-1140 / WM37) (Yeast), this protein is Topoisomerase 1-associated factor 1 (TOF1).